The following is a 338-amino-acid chain: Ketol-acid reductoisomerase (NADP(+)) (338 aa).

Positions 1 to 181 (MNVFYDKDAD…GGGRAGIIET (181 aa)) constitute a KARI N-terminal Rossmann domain. Residues 24-27 (YGSQ), Arg47, and Ser52 contribute to the NADP(+) site. Residue His107 is part of the active site. Gly133 is an NADP(+) binding site. One can recognise a KARI C-terminal knotted domain in the interval 182 to 327 (NFREETETDL…AKLRAMMPWI (146 aa)). Mg(2+) contacts are provided by Asp190, Glu194, Glu226, and Glu230. Substrate is bound at residue Ser251.

This sequence belongs to the ketol-acid reductoisomerase family. Requires Mg(2+) as cofactor.

The enzyme catalyses (2R)-2,3-dihydroxy-3-methylbutanoate + NADP(+) = (2S)-2-acetolactate + NADPH + H(+). It catalyses the reaction (2R,3R)-2,3-dihydroxy-3-methylpentanoate + NADP(+) = (S)-2-ethyl-2-hydroxy-3-oxobutanoate + NADPH + H(+). It functions in the pathway amino-acid biosynthesis; L-isoleucine biosynthesis; L-isoleucine from 2-oxobutanoate: step 2/4. It participates in amino-acid biosynthesis; L-valine biosynthesis; L-valine from pyruvate: step 2/4. Involved in the biosynthesis of branched-chain amino acids (BCAA). Catalyzes an alkyl-migration followed by a ketol-acid reduction of (S)-2-acetolactate (S2AL) to yield (R)-2,3-dihydroxy-isovalerate. In the isomerase reaction, S2AL is rearranged via a Mg-dependent methyl migration to produce 3-hydroxy-3-methyl-2-ketobutyrate (HMKB). In the reductase reaction, this 2-ketoacid undergoes a metal-dependent reduction by NADPH to yield (R)-2,3-dihydroxy-isovalerate. This chain is Ketol-acid reductoisomerase (NADP(+)), found in Burkholderia multivorans (strain ATCC 17616 / 249).